The primary structure comprises 422 residues: CinA-like protein (422 aa).

The protein belongs to the CinA family.

This chain is CinA-like protein, found in Mycolicibacterium gilvum (strain PYR-GCK) (Mycobacterium gilvum (strain PYR-GCK)).